Here is a 467-residue protein sequence, read N- to C-terminus: Argininosuccinate lyase (467 aa).

This sequence belongs to the lyase 1 family. Argininosuccinate lyase subfamily.

The protein localises to the cytoplasm. The enzyme catalyses 2-(N(omega)-L-arginino)succinate = fumarate + L-arginine. The protein operates within amino-acid biosynthesis; L-arginine biosynthesis; L-arginine from L-ornithine and carbamoyl phosphate: step 3/3. The chain is Argininosuccinate lyase from Chromohalobacter salexigens (strain ATCC BAA-138 / DSM 3043 / CIP 106854 / NCIMB 13768 / 1H11).